The chain runs to 377 residues: Cytochrome c peroxidase, mitochondrial (377 aa).

The N-terminal 32 residues, 1–32 (MSFRAPNLIRSTVGRRAGQTLNLRSQVIRRRF), are a transit peptide targeting the mitochondrion. Catalysis depends on His138, which acts as the Proton acceptor. His261 serves as a coordination point for heme b. The active-site Tryptophan radical intermediate is Trp277.

This sequence belongs to the peroxidase family. Cytochrome c peroxidase subfamily. Forms a one-to-one complex with cytochrome c. Interacts with MID1 (via C-terminus); the interaction may contribute to cellular detoxification of radicals. Heme b serves as cofactor.

Its subcellular location is the mitochondrion matrix. It is found in the mitochondrion intermembrane space. It carries out the reaction 2 Fe(II)-[cytochrome c] + H2O2 + 2 H(+) = 2 Fe(III)-[cytochrome c] + 2 H2O. Functionally, destroys radicals which are normally produced within the cells and which are toxic to biological systems. The polypeptide is Cytochrome c peroxidase, mitochondrial (CCP1) (Cryptococcus neoformans var. grubii serotype A (strain H99 / ATCC 208821 / CBS 10515 / FGSC 9487) (Filobasidiella neoformans var. grubii)).